The primary structure comprises 355 residues: Ataxin-3 (355 aa).

Methionine 1 participates in a covalent cross-link: Peptide (Met-Gly) (interchain with G-Cter in ubiquitin). Positions 1-180 (MESIFHEKQE…DCEADQLLQM (180 aa)) constitute a Josephin domain. The active-site Nucleophile is cysteine 14. The Proton acceptor role is filled by histidine 119. The active site involves asparagine 134. Residue lysine 200 forms a Glycyl lysine isopeptide (Lys-Gly) (interchain with G-Cter in ubiquitin) linkage. 2 consecutive UIM domains span residues 224-243 (DDED…IDME) and 244-263 (DEEA…SSRG). A disordered region spans residues 257-333 (MQGSSRGMCE…AGNAMSEEDV (77 aa)). Serine 268, serine 272, and serine 273 each carry phosphoserine. Residues 279 to 301 (EELRKRREAYFEKQQHQQQEADR) are compositionally biased toward basic and acidic residues. Positions 312–326 (PTTSSGGLRSNQAGN) are enriched in polar residues. Residue serine 321 is modified to Phosphoserine. The 20-residue stretch at 329 to 348 (SEEDVLRATVTVSLETAKDS) folds into the UIM 3 domain.

Interacts with STUB1/CHIP (when monoubiquitinated). Interacts with DNA repair proteins RAD23A and RAD23B. Interacts with BECN1 (via its poly-Gln domain). Interacts with PRKN, UBR2, VCP and tubulin. Post-translationally, monoubiquitinated by UBE2W, possibly leading to activate the deubiquitinating enzyme activity. In terms of tissue distribution, ubiquitously expressed.

The protein resides in the nucleus matrix. The protein localises to the nucleus. It localises to the lysosome membrane. The catalysed reaction is Thiol-dependent hydrolysis of ester, thioester, amide, peptide and isopeptide bonds formed by the C-terminal Gly of ubiquitin (a 76-residue protein attached to proteins as an intracellular targeting signal).. In terms of biological role, deubiquitinating enzyme involved in protein homeostasis maintenance, transcription, cytoskeleton regulation, myogenesis and degradation of misfolded chaperone substrates. Binds long polyubiquitin chains and trims them, while it has weak or no activity against chains of 4 or less ubiquitins. Involved in degradation of misfolded chaperone substrates via its interaction with STUB1/CHIP: recruited to monoubiquitinated STUB1/CHIP, and restricts the length of ubiquitin chain attached to STUB1/CHIP substrates and preventing further chain extension. Interacts with key regulators of transcription and represses transcription: acts as a histone-binding protein that regulates transcription. Acts as a negative regulator of mTORC1 signaling in response to amino acid deprivation by mediating deubiquitination of RHEB, thereby promoting RHEB inactivation by the TSC-TBC complex. Regulates autophagy via the deubiquitination of 'Lys-402' of BECN1 leading to the stabilization of BECN1. This chain is Ataxin-3 (Atxn3), found in Rattus norvegicus (Rat).